The chain runs to 498 residues: Lysine--tRNA ligase (498 aa).

Mg(2+)-binding residues include Glu-408 and Glu-415.

This sequence belongs to the class-II aminoacyl-tRNA synthetase family. As to quaternary structure, homodimer. Mg(2+) serves as cofactor.

The protein resides in the cytoplasm. It catalyses the reaction tRNA(Lys) + L-lysine + ATP = L-lysyl-tRNA(Lys) + AMP + diphosphate. In Listeria innocua serovar 6a (strain ATCC BAA-680 / CLIP 11262), this protein is Lysine--tRNA ligase.